We begin with the raw amino-acid sequence, 233 residues long: ATP synthase subunit a (233 aa).

7 consecutive transmembrane segments (helical) span residues 29–49 (FKHVFYTWCVMAMLFAVSFIV), 60–80 (LQNIFEVIIGGLEEFVVSITG), 89–109 (VLIVFFLFILCMNLTGLVPGF), 115–135 (NINTTASLALFCFIYYNYIGI), 143–163 (IKHFMGPMWWLSPLMLPLELI), 185–205 (FVLILFFMLAPIIGTIPIYFL), and 206–226 (FTLAKVLQAFIFFMLATIYLK).

The protein belongs to the ATPase A chain family. In terms of assembly, F-type ATPases have 2 components, CF(1) - the catalytic core - and CF(0) - the membrane proton channel. CF(1) has five subunits: alpha(3), beta(3), gamma(1), delta(1), epsilon(1). CF(0) has three main subunits: a(1), b(2) and c(9-12). The alpha and beta chains form an alternating ring which encloses part of the gamma chain. CF(1) is attached to CF(0) by a central stalk formed by the gamma and epsilon chains, while a peripheral stalk is formed by the delta and b chains.

Its subcellular location is the cell inner membrane. In terms of biological role, key component of the proton channel; it plays a direct role in the translocation of protons across the membrane. This is ATP synthase subunit a from Oleidesulfovibrio alaskensis (strain ATCC BAA-1058 / DSM 17464 / G20) (Desulfovibrio alaskensis).